Consider the following 202-residue polypeptide: N-(5'-phosphoribosyl)anthranilate isomerase (202 aa).

Belongs to the TrpF family.

The catalysed reaction is N-(5-phospho-beta-D-ribosyl)anthranilate = 1-(2-carboxyphenylamino)-1-deoxy-D-ribulose 5-phosphate. It functions in the pathway amino-acid biosynthesis; L-tryptophan biosynthesis; L-tryptophan from chorismate: step 3/5. In Listeria monocytogenes serotype 4a (strain HCC23), this protein is N-(5'-phosphoribosyl)anthranilate isomerase.